The following is an 88-amino-acid chain: Toxin ICK-12 (88 aa).

Positions 1–19 (MKSIVYMLLFCTFTVVILG) are cleaved as a signal peptide. 4 disulfide bridges follow: Cys-41/Cys-55, Cys-41/Cys-78, Cys-54/Cys-67, and Cys-81/Cys-88.

The protein belongs to the neurotoxin 27 (Jztx-72) family. ICK-41 subfamily. As to expression, expressed by the venom gland.

It localises to the secreted. Probable neurotoxin with ion channel impairing activity. The chain is Toxin ICK-12 from Trittame loki (Brush-footed trapdoor spider).